The primary structure comprises 1717 residues: Protein MON2 homolog (1717 aa).

The residue at position 2 (Ser-2) is an N-acetylserine. Phosphoserine is present on residues Ser-205 and Ser-537. The segment at 511-538 is disordered; sequence ETECQTTTEEGSSPTQSTEQQDLQSTSD. Over residues 522–538 the composition is skewed to polar residues; sequence SSPTQSTEQQDLQSTSD.

Belongs to the MON2 family. As to quaternary structure, homooligomer. Heterotrimer with ATP9A and DOP1B; this interaction is retromer-independent. Interacts with SNX3.

The protein localises to the early endosome membrane. In terms of biological role, plays a role in regulating membrane trafficking of cargo proteins. Together with ATP9A and DOP1B, regulates SNX3 retromer-mediated endosomal sorting of WLS away from lysosomal degradation. The protein is Protein MON2 homolog of Homo sapiens (Human).